The chain runs to 203 residues: Large ribosomal subunit protein bL25 (203 aa).

The protein belongs to the bacterial ribosomal protein bL25 family. CTC subfamily. Part of the 50S ribosomal subunit; part of the 5S rRNA/L5/L18/L25 subcomplex. Contacts the 5S rRNA. Binds to the 5S rRNA independently of L5 and L18.

Functionally, this is one of the proteins that binds to the 5S RNA in the ribosome where it forms part of the central protuberance. This is Large ribosomal subunit protein bL25 from Xanthobacter autotrophicus (strain ATCC BAA-1158 / Py2).